The sequence spans 78 residues: Large ribosomal subunit protein bL28 (78 aa).

It belongs to the bacterial ribosomal protein bL28 family.

This is Large ribosomal subunit protein bL28 from Ruthia magnifica subsp. Calyptogena magnifica.